We begin with the raw amino-acid sequence, 196 residues long: Ribosome maturation factor RimP (196 aa).

The protein belongs to the RimP family.

Its subcellular location is the cytoplasm. Functionally, required for maturation of 30S ribosomal subunits. The sequence is that of Ribosome maturation factor RimP from Dinoroseobacter shibae (strain DSM 16493 / NCIMB 14021 / DFL 12).